We begin with the raw amino-acid sequence, 287 residues long: Protease HtpX (287 aa).

Transmembrane regions (helical) follow at residues 4-24 (VLLF…VFNI) and 37-57 (VGLL…SLWI). His-143 lines the Zn(2+) pocket. Glu-144 is a catalytic residue. Residue His-147 coordinates Zn(2+). Helical transmembrane passes span 158-178 (LIQG…ASAI) and 194-214 (GVVM…VMWF). Glu-219 provides a ligand contact to Zn(2+).

The protein belongs to the peptidase M48B family. Zn(2+) serves as cofactor.

It is found in the cell inner membrane. The sequence is that of Protease HtpX from Idiomarina loihiensis (strain ATCC BAA-735 / DSM 15497 / L2-TR).